A 299-amino-acid chain; its full sequence is Bifunctional protein FolD (299 aa).

NADP(+)-binding positions include 168 to 170, S193, and I234; that span reads GRS.

This sequence belongs to the tetrahydrofolate dehydrogenase/cyclohydrolase family. In terms of assembly, homodimer.

The enzyme catalyses (6R)-5,10-methylene-5,6,7,8-tetrahydrofolate + NADP(+) = (6R)-5,10-methenyltetrahydrofolate + NADPH. It catalyses the reaction (6R)-5,10-methenyltetrahydrofolate + H2O = (6R)-10-formyltetrahydrofolate + H(+). Its pathway is one-carbon metabolism; tetrahydrofolate interconversion. Functionally, catalyzes the oxidation of 5,10-methylenetetrahydrofolate to 5,10-methenyltetrahydrofolate and then the hydrolysis of 5,10-methenyltetrahydrofolate to 10-formyltetrahydrofolate. This Brucella anthropi (strain ATCC 49188 / DSM 6882 / CCUG 24695 / JCM 21032 / LMG 3331 / NBRC 15819 / NCTC 12168 / Alc 37) (Ochrobactrum anthropi) protein is Bifunctional protein FolD.